A 171-amino-acid chain; its full sequence is Co-chaperone protein HscB (171 aa).

A J domain is found at 2 to 74; it reads DYFTLFGLPA…LARAEYLLSL (73 aa).

It belongs to the HscB family. In terms of assembly, interacts with HscA and stimulates its ATPase activity. Interacts with IscU.

In terms of biological role, co-chaperone involved in the maturation of iron-sulfur cluster-containing proteins. Seems to help targeting proteins to be folded toward HscA. The sequence is that of Co-chaperone protein HscB from Enterobacter sp. (strain 638).